The sequence spans 191 residues: Putative inactive glutathione hydrolase 4 (191 aa).

Thr-54 (nucleophile) is an active-site residue. L-glutamate is bound by residues Thr-72, Asn-74, Glu-93, Asp-96, 126–127 (SS), and 147–148 (GG).

It belongs to the gamma-glutamyltransferase family. As to expression, expressed at low levels in embryo, roots and leaves. In mature plants, expression is restricted to vascular tissues of roots, leaves, flowers and siliques.

The polypeptide is Putative inactive glutathione hydrolase 4 (GGT4) (Arabidopsis thaliana (Mouse-ear cress)).